A 352-amino-acid chain; its full sequence is Trifunctional sesterterpene/triterpene/sesquarterpene synthase (352 aa).

It belongs to the large terpene synthase family.

The enzyme catalyses (2E,6E,10E,14E)-geranylfarnesyl diphosphate = beta-geranylfarnesene + diphosphate. It catalyses the reaction all-trans-hexaprenyl diphosphate = beta-hexaprene + diphosphate. It carries out the reaction all-trans-heptaprenyl diphosphate = beta-heptaprene + diphosphate. In terms of biological role, catalyzes the conversion of geranylfarnesyl diphosphate (GFPP) and hexaprenyl diphosphate (HexPP) into beta-geranylfarnesene and beta-hexaprene, respectively. Also produces beta-heptaprene from heptaprenyl diphosphate (HepPP) as a minor product. The protein is Trifunctional sesterterpene/triterpene/sesquarterpene synthase of Shouchella clausii (Alkalihalobacillus clausii).